The primary structure comprises 430 residues: Resistance to inhibitors of cholinesterase protein 19 (430 aa).

An AH domain is found at 56–260; that stretch reads ASDNELDTCL…TSRAFETLAE (205 aa). Residues 279–342 are disordered; sequence GTKPERERKS…SPLIEDVDDE (64 aa). A compositionally biased stretch (basic and acidic residues) spans 281–294; sequence KPERERKSEKEESA.

Interacts with the GTPase activator protein tbc-8; the interaction is direct and may be required for the activation of rab-2 and dense vesicle maturation in cholinergic motoneurons. Interacts with rund-1. As to expression, expressed in all neurons. Highly expressed in m2 pharyngeal neurons and some pharyngeal interneurons. Also expressed in the excretory canal and the gland cells located just below the nerve ring in the head.

Its subcellular location is the cytoplasm. It localises to the cytoplasmic vesicle membrane. Functionally, may be involved in neurotransmitter secretion. In association with the GTPase activator protein tbc-8 activates rab-2 during dense core vesicle maturation in cholinergic motoneurons. The chain is Resistance to inhibitors of cholinesterase protein 19 from Caenorhabditis elegans.